The following is a 118-amino-acid chain: Small ribosomal subunit protein uS13 (118 aa).

Positions 94–118 are disordered; sequence GLPLRGQRTKTNARTRKGRRKGTSS.

This sequence belongs to the universal ribosomal protein uS13 family. As to quaternary structure, part of the 30S ribosomal subunit. Forms a loose heterodimer with protein S19. Forms two bridges to the 50S subunit in the 70S ribosome.

In terms of biological role, located at the top of the head of the 30S subunit, it contacts several helices of the 16S rRNA. In the 70S ribosome it contacts the 23S rRNA (bridge B1a) and protein L5 of the 50S subunit (bridge B1b), connecting the 2 subunits; these bridges are implicated in subunit movement. Contacts the tRNAs in the A and P-sites. This is Small ribosomal subunit protein uS13 from Legionella pneumophila (strain Paris).